A 347-amino-acid chain; its full sequence is Probable cytosolic iron-sulfur protein assembly protein 1 (347 aa).

7 WD repeats span residues 11–48 (LHNE…DGLV), 62–101 (SHKK…GDAD), 122–161 (GHEN…EEYE), 168–207 (EHSQ…WEAA), 212–255 (GHEG…SIEE), 266–304 (VHGK…VWEV), and 311–347 (SHSI…WAYN).

The protein belongs to the WD repeat CIA1 family. In terms of assembly, interacts with NAR1.

Its subcellular location is the cytoplasm. The protein localises to the nucleus. In terms of biological role, essential component of the cytosolic iron-sulfur (Fe/S) protein assembly machinery. Required for the maturation of extramitochondrial Fe/S proteins. This is Probable cytosolic iron-sulfur protein assembly protein 1 from Vanderwaltozyma polyspora (strain ATCC 22028 / DSM 70294 / BCRC 21397 / CBS 2163 / NBRC 10782 / NRRL Y-8283 / UCD 57-17) (Kluyveromyces polysporus).